The sequence spans 498 residues: ATP synthase subunit beta, chloroplastic (498 aa).

An ATP-binding site is contributed by 172 to 179 (GGAGVGKT).

This sequence belongs to the ATPase alpha/beta chains family. F-type ATPases have 2 components, CF(1) - the catalytic core - and CF(0) - the membrane proton channel. CF(1) has five subunits: alpha(3), beta(3), gamma(1), delta(1), epsilon(1). CF(0) has four main subunits: a(1), b(1), b'(1) and c(9-12).

The protein resides in the plastid. The protein localises to the chloroplast thylakoid membrane. The enzyme catalyses ATP + H2O + 4 H(+)(in) = ADP + phosphate + 5 H(+)(out). Functionally, produces ATP from ADP in the presence of a proton gradient across the membrane. The catalytic sites are hosted primarily by the beta subunits. The protein is ATP synthase subunit beta, chloroplastic of Nymphaea alba (White water-lily).